Here is a 226-residue protein sequence, read N- to C-terminus: Cytidylate kinase (226 aa).

Position 11–19 (11–19 (GPAGAGKST)) interacts with ATP.

This sequence belongs to the cytidylate kinase family. Type 1 subfamily.

The protein resides in the cytoplasm. The catalysed reaction is CMP + ATP = CDP + ADP. It catalyses the reaction dCMP + ATP = dCDP + ADP. This Pelotomaculum thermopropionicum (strain DSM 13744 / JCM 10971 / SI) protein is Cytidylate kinase.